The chain runs to 312 residues: Retinol dehydrogenase 8 (312 aa).

9-18 (LISGCSSGIG) is an NADP(+) binding site. 3 helical membrane-spanning segments follow: residues 87-107 (VLVN…SLAA), 138-158 (IVVV…VYAA), and 170-190 (LAVQ…GPVV). Ser-143 provides a ligand contact to substrate. The active-site Proton acceptor is the Tyr-156.

The protein belongs to the short-chain dehydrogenases/reductases (SDR) family. In terms of tissue distribution, detected in photoreceptor outer segments in the retina (at protein level).

It localises to the membrane. The catalysed reaction is all-trans-retinol + NADP(+) = all-trans-retinal + NADPH + H(+). Functionally, retinol dehydrogenase with a clear preference for NADP. Converts all-trans-retinal to all-trans-retinol. May play a role in the regeneration of visual pigment at high light intensity. This Bos taurus (Bovine) protein is Retinol dehydrogenase 8 (RDH8).